The chain runs to 185 residues: Elongation factor P (185 aa).

The protein belongs to the elongation factor P family.

The protein localises to the cytoplasm. It functions in the pathway protein biosynthesis; polypeptide chain elongation. Functionally, involved in peptide bond synthesis. Stimulates efficient translation and peptide-bond synthesis on native or reconstituted 70S ribosomes in vitro. Probably functions indirectly by altering the affinity of the ribosome for aminoacyl-tRNA, thus increasing their reactivity as acceptors for peptidyl transferase. The sequence is that of Elongation factor P from Mesomycoplasma hyopneumoniae (strain J / ATCC 25934 / NCTC 10110) (Mycoplasma hyopneumoniae).